Consider the following 451-residue polypeptide: Uronate isomerase (451 aa).

This sequence belongs to the metallo-dependent hydrolases superfamily. Uronate isomerase family. As to quaternary structure, homotrimer.

The catalysed reaction is D-glucuronate = D-fructuronate. It carries out the reaction aldehydo-D-galacturonate = keto-D-tagaturonate. The protein operates within carbohydrate metabolism; pentose and glucuronate interconversion. In Thermotoga maritima (strain ATCC 43589 / DSM 3109 / JCM 10099 / NBRC 100826 / MSB8), this protein is Uronate isomerase.